The following is a 210-amino-acid chain: Chaperone protein TorD (210 aa).

It belongs to the TorD/DmsD family. TorD subfamily.

It is found in the cytoplasm. Functionally, involved in the biogenesis of TorA. Acts on TorA before the insertion of the molybdenum cofactor and, as a result, probably favors a conformation of the apoenzyme that is competent for acquiring the cofactor. The polypeptide is Chaperone protein TorD (Salmonella newport (strain SL254)).